Here is a 1094-residue protein sequence, read N- to C-terminus: MAGGAHRADRATGEERKEGGGRWRAPHSPSPPGPRGCPVPLKAAAQSLCRKPTWGRYCTLLLFQRKLEIYSVELHAATDIKKKEGRDGKKDNDLELKRNQQKEELKKELDLDDHKLSNKELETKYGTDIIRGLSSTRAAELLAQNGPNALTPPKQTPEIIKFLKQMVGGFSILLWVGAVLCWIAFGIQYVSNPSASLDRVYLGTVLAVVVILTGIFAYYQEAKSTNIMASFCKMIPQQAVVIRDSEKKVIPAEQLVVGDIVEIKGGDQIPADIRLLSAQGCKVDNSSLTGESEPQSRSSGFTHENPLETKNITFYSTTCLEGTATGMVINTGDRTIIGRIASLASGVGNEKTPIAIEIEHFVHIVAGVAVSVGILFFIIAVCMKYHVLDAIIFLIAIIVANVPEGLLATVTVALSLTAKRVAKKNCLVKNLEAVETLGSTSIICSDKTGTLTQNRMTVAHLWFDNQIFVADTSEDNLNQGFDQSSGTWTSLSKIIALCNRAEFKPGEESVPIMKRVVVGDASETALLKFSEVILGDVMEIRKRNHKVVEIPFNSTNKFQLSIHQTEDPNDKRFLLVMKGAPERILEKCSTIMINGKEQPLDKSMAQAFHTAYMELGGLGERVLGFCHFYLPADEFPETYSFDSESMNFPTSNLCFVGLLSMIDPPRSTVPDAVTKCRSAGIKVIMVTGDHPITAKAIAKSVGIISANSETVEDIAKRCNIAVEQVNKRDAKAAVVTGMELKDMSPEQLDELLANYPEIVFARTSPQQKLIIVEGCQRQDAVVAVTGDGVNDSPALKKADIGVAMGITGSDAAKNAADMILLDDNFSSIVTGVEEGRLIFDNLKKTIAYTLTKNIAELCPFLIYIILGLPLPIGTITLLFIDLGTDIIPSIALAYEKAESDIMNRKPRHKKKDRLVNQQLAVYSYLHIGLMQALGAFLVYFTVYAQQGFRPTSLFHLRIAWDSDHLNDLEDNYGQEWTSYQRQYLEWTGYTAFFVGIMVQQIADLIIRKTRKNSIFKQGLFRNKVIWVGIASQIIVALLLSYGLGSITALNFTMLKAQYWFVAVPHAILIWVYDEMRKLFIRLYPGSWWDKNMYY.

Residues 1-21 (MAGGAHRADRATGEERKEGGG) are compositionally biased toward basic and acidic residues. The segment at 1 to 37 (MAGGAHRADRATGEERKEGGGRWRAPHSPSPPGPRGC) is disordered. Residues 28–37 (SPSPPGPRGC) show a composition bias toward pro residues. The Cytoplasmic portion of the chain corresponds to 56-157 (RYCTLLLFQR…NALTPPKQTP (102 aa)). A helical transmembrane segment spans residues 158–178 (EIIKFLKQMVGGFSILLWVGA). The Lumenal portion of the chain corresponds to 179 to 201 (VLCWIAFGIQYVSNPSASLDRVY). The helical transmembrane segment at 202–222 (LGTVLAVVVILTGIFAYYQEA) threads the bilayer. Residues 223 to 358 (KSTNIMASFC…NEKTPIAIEI (136 aa)) are Cytoplasmic-facing. Residues 286 to 305 (SSLTGESEPQSRSSGFTHEN) are disordered. The helical transmembrane segment at 359–378 (EHFVHIVAGVAVSVGILFFI) threads the bilayer. Residues 379-390 (IAVCMKYHVLDA) lie on the Lumenal side of the membrane. Residues 391 to 408 (IIFLIAIIVANVPEGLLA) traverse the membrane as a helical segment. The Cytoplasmic portion of the chain corresponds to 409–842 (TVTVALSLTA…EEGRLIFDNL (434 aa)). Aspartate 446 serves as the catalytic 4-aspartylphosphate intermediate. Mg(2+)-binding residues include aspartate 787 and aspartate 791. Residues 843–862 (KKTIAYTLTKNIAELCPFLI) traverse the membrane as a helical segment. Residues 863–872 (YIILGLPLPI) lie on the Lumenal side of the membrane. Residues 873–893 (GTITLLFIDLGTDIIPSIALA) form a helical membrane-spanning segment. Over 894–913 (YEKAESDIMNRKPRHKKKDR) the chain is Cytoplasmic. Residues 914–936 (LVNQQLAVYSYLHIGLMQALGAF) traverse the membrane as a helical segment. The Lumenal portion of the chain corresponds to 937 to 988 (LVYFTVYAQQGFRPTSLFHLRIAWDSDHLNDLEDNYGQEWTSYQRQYLEWTG). A helical transmembrane segment spans residues 989–1008 (YTAFFVGIMVQQIADLIIRK). At 1009–1022 (TRKNSIFKQGLFRN) the chain is on the cytoplasmic side. Residue serine 1013 is modified to Phosphoserine; by PKA. The chain crosses the membrane as a helical span at residues 1023-1041 (KVIWVGIASQIIVALLLSY). Topologically, residues 1042-1056 (GLGSITALNFTMLKA) are lumenal. Residues 1057-1077 (QYWFVAVPHAILIWVYDEMRK) traverse the membrane as a helical segment. Over 1078–1094 (LFIRLYPGSWWDKNMYY) the chain is Cytoplasmic.

This sequence belongs to the cation transport ATPase (P-type) (TC 3.A.3) family. Type IIC subfamily. In terms of assembly, the X(+)/K(+) ATPase pump is composed of a catalytic alpha subunit and an auxiliary non-catalytic beta subunit. The alpha subunit pairs with the beta subunit of gastric H(+)/K(+) ATPase ATP4B or the beta subunit of Na(+)/K(+) ATPases ATP1B1 and ATP1B3; this interaction is required for the formation of a functionally active pump and its targeting at the plasma membrane. Found in the skin, kidney, distal colon and brain. In the kidney it is found in the connecting tubule, cortical collecting duct and outer medullary collecting duct while in the brain it is specific to choroid plexus and cortex.

It localises to the apical cell membrane. It carries out the reaction K(+)(out) + ATP + H2O + H(+)(in) = K(+)(in) + ADP + phosphate + 2 H(+)(out). The catalysed reaction is K(+)(out) + Na(+)(in) + ATP + H2O = K(+)(in) + Na(+)(out) + ADP + phosphate + H(+). The catalytic subunit of a H(+)/K(+) ATPase and/or Na(+)/K(+) ATPase pump which transports K(+) ions in exchange for Na(+) and/or H(+) ions across the apical membrane of epithelial cells. Uses ATP as an energy source to pump K(+) ions into the cell while transporting Na(+) and/or H(+) ions to the extracellular compartment. Involved in the maintenance of electrolyte homeostasis through K(+) ion absorption in kidney and colon. In the airway epithelium, may play a primary role in mucus acidification regulating its viscosity and clearance. This is Potassium-transporting ATPase alpha chain 2 (ATP12A) from Oryctolagus cuniculus (Rabbit).